The primary structure comprises 150 residues: Large ribosomal subunit protein bL9 (150 aa).

This sequence belongs to the bacterial ribosomal protein bL9 family.

Binds to the 23S rRNA. The chain is Large ribosomal subunit protein bL9 from Alcanivorax borkumensis (strain ATCC 700651 / DSM 11573 / NCIMB 13689 / SK2).